We begin with the raw amino-acid sequence, 167 residues long: SsrA-binding protein (167 aa).

Positions 139–158 (QNHDKRDAAKERDWQRDKQR) are enriched in basic and acidic residues. Residues 139–167 (QNHDKRDAAKERDWQRDKQRVMRRHNRDA) form a disordered region.

The protein belongs to the SmpB family.

It localises to the cytoplasm. Required for rescue of stalled ribosomes mediated by trans-translation. Binds to transfer-messenger RNA (tmRNA), required for stable association of tmRNA with ribosomes. tmRNA and SmpB together mimic tRNA shape, replacing the anticodon stem-loop with SmpB. tmRNA is encoded by the ssrA gene; the 2 termini fold to resemble tRNA(Ala) and it encodes a 'tag peptide', a short internal open reading frame. During trans-translation Ala-aminoacylated tmRNA acts like a tRNA, entering the A-site of stalled ribosomes, displacing the stalled mRNA. The ribosome then switches to translate the ORF on the tmRNA; the nascent peptide is terminated with the 'tag peptide' encoded by the tmRNA and targeted for degradation. The ribosome is freed to recommence translation, which seems to be the essential function of trans-translation. The chain is SsrA-binding protein from Xanthomonas oryzae pv. oryzae (strain MAFF 311018).